The following is a 469-amino-acid chain: ATP-dependent protease ATPase subunit HslU (469 aa).

ATP is bound by residues I21, 63–68 (GVGKTE), D282, E347, and R419.

The protein belongs to the ClpX chaperone family. HslU subfamily. In terms of assembly, a double ring-shaped homohexamer of HslV is capped on each side by a ring-shaped HslU homohexamer. The assembly of the HslU/HslV complex is dependent on binding of ATP.

Its subcellular location is the cytoplasm. In terms of biological role, ATPase subunit of a proteasome-like degradation complex; this subunit has chaperone activity. The binding of ATP and its subsequent hydrolysis by HslU are essential for unfolding of protein substrates subsequently hydrolyzed by HslV. HslU recognizes the N-terminal part of its protein substrates and unfolds these before they are guided to HslV for hydrolysis. This chain is ATP-dependent protease ATPase subunit HslU, found in Petrotoga mobilis (strain DSM 10674 / SJ95).